Consider the following 139-residue polypeptide: Large ribosomal subunit protein uL16 (139 aa).

Belongs to the universal ribosomal protein uL16 family. Part of the 50S ribosomal subunit.

In terms of biological role, binds 23S rRNA and is also seen to make contacts with the A and possibly P site tRNAs. The sequence is that of Large ribosomal subunit protein uL16 from Treponema denticola (strain ATCC 35405 / DSM 14222 / CIP 103919 / JCM 8153 / KCTC 15104).